The following is an 886-amino-acid chain: Cytosolic carboxypeptidase-like protein 5 (886 aa).

The 414-residue stretch at 157-570 (YPFSYSDCQE…AMAIAALDMA (414 aa)) folds into the Peptidase M14 domain. His252 and Glu255 together coordinate Zn(2+). Low complexity predominate over residues 344–354 (SQSSSEHQPSS). Residues 344-364 (SQSSSEHQPSSCLPPDAPVSD) are disordered. His434 serves as a coordination point for Zn(2+). Glu516 (proton donor/acceptor) is an active-site residue. Disordered stretches follow at residues 605–734 (STLN…SSHK) and 784–848 (LQAR…FSPI). Residues 631–640 (CSENTLSRAR) are compositionally biased toward polar residues. A compositionally biased stretch (low complexity) spans 641 to 666 (SFSTGTSAGGSSSSQQNSPQMKNSPS). The span at 696–705 (REPRSQDRRR) shows a compositional bias: basic and acidic residues. The span at 714–732 (PAGSLAPSPAPTSSGPASS) shows a compositional bias: low complexity. Ser841 carries the phosphoserine modification.

The protein belongs to the peptidase M14 family. The cofactor is Zn(2+). In terms of tissue distribution, expressed in brain.

The protein localises to the cytoplasm. It localises to the cytosol. It is found in the nucleus. The protein resides in the cytoskeleton. Its subcellular location is the spindle. The protein localises to the midbody. It catalyses the reaction gamma-L-glutamyl-L-glutamyl-[protein] + H2O = L-glutamyl-[protein] + L-glutamate. The enzyme catalyses (L-glutamyl)(n+1)-gamma-L-glutamyl-L-glutamyl-[protein] + H2O = (L-glutamyl)(n)-gamma-L-glutamyl-L-glutamyl-[protein] + L-glutamate. It carries out the reaction C-terminal L-alpha-aminoacyl-L-glutamyl-[tubulin] + H2O = C-terminal L-alpha-aminoacyl-[tubulin] + L-glutamate. The catalysed reaction is C-terminal L-alpha-aminoacyl-L-glutamyl-L-glutamyl-[tubulin] + H2O = C-terminal L-alpha-aminoacyl-L-glutamyl-[tubulin] + L-glutamate. Its function is as follows. Metallocarboxypeptidase that mediates deglutamylation of tubulin and non-tubulin target proteins. Catalyzes the removal of polyglutamate side chains present on the gamma-carboxyl group of glutamate residues within the C-terminal tail of alpha- and beta-tubulin. Cleaves alpha- and gamma-linked polyglutamate tubulin side-chain, as well as the branching point glutamate. Also catalyzes the removal of alpha-linked glutamate residues from the carboxy-terminus of alpha-tubulin. Mediates deglutamylation of nucleotidyltransferase CGAS, leading to CGAS antiviral defense response activation. This Homo sapiens (Human) protein is Cytosolic carboxypeptidase-like protein 5.